The primary structure comprises 1006 residues: Serine/threonine-protein phosphatase BSL3 (1006 aa).

A disordered region spans residues 1–67; the sequence is MDLDSSMVPE…QQQQQPQVTA (67 aa). Composition is skewed to low complexity over residues 38–47 and 54–67; these read SESESASLTP and QQQQQQQQQPQVTA. 5 Kelch repeats span residues 138 to 184, 242 to 290, 295 to 345, 351 to 398, and 419 to 465; these read TSAG…VATA, YLMA…TASA, LLLL…VFVN, SGGA…DAAG, and LIFI…TPPG. Disordered regions lie at residues 454-494 and 552-579; these read AAAA…LGSP and GEVELPDRDRGAEATPSGKPSLSLIKPD. At Ser616 the chain carries Phosphoserine. Positions 709, 711, 743, and 775 each coordinate Mn(2+). His776 acts as the Proton donor in catalysis. Mn(2+)-binding residues include His828 and His907. The residue at position 964 (Ser964) is a Phosphoserine. The interval 982-1006 is disordered; the sequence is NVNRPPTPTRGRPQNPNDRGSLAWI.

The protein belongs to the PPP phosphatase family. BSU subfamily. Mn(2+) is required as a cofactor. Expressed throughout the plant, with a higher level in younger parts.

Its subcellular location is the nucleus. The enzyme catalyses O-phospho-L-seryl-[protein] + H2O = L-seryl-[protein] + phosphate. It carries out the reaction O-phospho-L-threonyl-[protein] + H2O = L-threonyl-[protein] + phosphate. Its function is as follows. Phosphatase involved in elongation process, probably by acting as a regulator of brassinolide signaling. The sequence is that of Serine/threonine-protein phosphatase BSL3 (BSL3) from Arabidopsis thaliana (Mouse-ear cress).